The sequence spans 59 residues: UPF0434 protein Shew185_1670 (59 aa).

It belongs to the UPF0434 family.

This is UPF0434 protein Shew185_1670 from Shewanella baltica (strain OS185).